The following is a 517-amino-acid chain: Serine hydroxymethyltransferase 2, mitochondrial (517 aa).

The transit peptide at 1-29 (MALALRRLSSSVKKPISLLSSNGGSLRFM) directs the protein to the mitochondrion. S82 provides a ligand contact to L-serine. Pemetrexed contacts are provided by residues S82, Y102, E104, Y112, 148 to 150 (SGS), and H177. L-serine-binding residues include E104 and Y112. E104 contributes to the methotrexate binding site. 184 to 186 (TDT) contacts methotrexate. Pemetrexed is bound by residues S232 and H260. Residues H260 and K286 each coordinate L-serine. An N6-(pyridoxal phosphate)lysine modification is found at K286. G331 contacts pemetrexed. Methotrexate is bound at residue K414. Position 430 (R430) interacts with L-serine. R430 is a pemetrexed binding site.

It belongs to the SHMT family. In terms of assembly, homotetramer. Pyridoxal 5'-phosphate serves as cofactor. As to expression, ubiquitous. Mainly expressed in the shoot apical meristem and roots. Also detected in the leaf vasculature, especially in the protoxylem and adjacent cell layers.

It localises to the mitochondrion. The catalysed reaction is (6R)-5,10-methylene-5,6,7,8-tetrahydrofolate + glycine + H2O = (6S)-5,6,7,8-tetrahydrofolate + L-serine. Its pathway is one-carbon metabolism; tetrahydrofolate interconversion. Inhibited by the antifolate drugs methotrexate and pemetrexed. Functionally, functions outside the photorespiratory pathway in catalyzing the interconversion of serine and glycine with the conversion of tetrahydrofolate (THF) into 5,10-methylene-THF. The sequence is that of Serine hydroxymethyltransferase 2, mitochondrial from Arabidopsis thaliana (Mouse-ear cress).